The sequence spans 106 residues: Large ribosomal subunit protein eL42 (106 aa).

The segment at 36–56 (FAQGKRRYDRKQSGYGGQTKP) is disordered.

The protein belongs to the eukaryotic ribosomal protein eL42 family.

The protein is Large ribosomal subunit protein eL42 (RPL44) of Coprinopsis cinerea (strain Okayama-7 / 130 / ATCC MYA-4618 / FGSC 9003) (Inky cap fungus).